The sequence spans 303 residues: Growth/differentiation factor 15 (303 aa).

An N-terminal signal peptide occupies residues 1-30 (MALRALHAQPTGGPQLRFLLFLLLLLLLLS). The propeptide occupies 31–188 (WPSQGDALAL…LRSAAGRGRR (158 aa)). A glycan (N-linked (GlcNAc...) asparagine) is linked at Asn-71. Disulfide bonds link Cys-198/Cys-205, Cys-206/Cys-269, Cys-235/Cys-300, and Cys-239/Cys-302.

The protein belongs to the TGF-beta family. As to quaternary structure, homodimer; disulfide-linked. Interacts with GFRAL and RET; ligand of GFRAL, which mediates GDF15 internalization and cellular signaling through interaction with RET via the formation of a 2:2:2 ternary complex composed of GDF15, GFRAL and RET. In terms of tissue distribution, detected in plasma (at protein level).

The protein localises to the secreted. Hormone produced in response to various stresses to confer information about those stresses to the brain, and trigger an aversive response, characterized by nausea and/or loss of appetite. The aversive response is both required to reduce continuing exposure to those stresses at the time of exposure and to promote avoidance behavior in the future. Acts by binding to its receptor, GFRAL, activating GFRAL-expressing neurons localized in the area postrema and nucleus tractus solitarius of the brainstem. It then triggers the activation of neurons localized within the parabrachial nucleus and central amygdala, which constitutes part of the 'emergency circuit' that shapes responses to stressful conditions. The GDF15-GFRAL signal induces expression of genes involved in metabolism, such as lipid metabolism in adipose tissues. Contributes to the effect of metformin, an anti-diabetic drug, on appetite reduction and weight loss: produced in the kidney in response to metformin treatment, thereby activating the GDF15-GFRAL response, leading to reduced appetite and weight. Required for avoidance behavior in response to food allergens: induced downstream of mast cell activation to promote aversion and minimize harmful effects of exposure to noxious substances. Produced in response to anticancer drugs, such as camptothecin or cisplatin, promoting nausea and contributing to malnutrition. Overproduced in many cancers, promoting anorexia in cancer (cachexia). Responsible for the risk of nausea during pregnancy: high levels of GDF15 during pregnancy, mostly originating from embryos, are associated with increased nausea. Maternal sensitivity to nausea is probably determined by pre-pregnancy exposure to GDF15, females with naturally high level of GDF15 being less susceptible to nausea than female rats with low levels of GDF15 before pregnancy. Promotes metabolic adaptation in response to systemic inflammation caused by bacterial and viral infections in order to promote tissue tolerance and prevent tissue damage. Required for tissue tolerance in response to myocardial infarction by acting as an inhibitor of leukocyte integring activation, thereby protecting against cardiac rupture. Inhibits growth hormone signaling on hepatocytes. This is Growth/differentiation factor 15 from Rattus norvegicus (Rat).